The primary structure comprises 451 residues: Gamma-aminobutyric acid receptor subunit alpha-2 (451 aa).

An N-terminal signal peptide occupies residues 1-28; the sequence is MKTKLNIYNMQFLLFVFLVWDPARLVLA. Residues 29–249 are Extracellular-facing; that stretch reads NIQEDEAKNN…MTAHFHLKRK (221 aa). N-linked (GlcNAc...) asparagine glycosylation is present at Asn-38. Arg-94 contacts 4-aminobutanoate. N-linked (GlcNAc...) asparagine glycosylation is present at Asn-138. Thr-157 serves as a coordination point for 4-aminobutanoate. Cys-166 and Cys-180 are oxidised to a cystine. A helical transmembrane segment spans residues 250-270; sequence IGYFVIQTYLPCIMTVILSQV. At 271–280 the chain is on the cytoplasmic side; the sequence is SFWLNRESVP. The helical transmembrane segment at 281–300 threads the bilayer; it reads ARTVFGVTTVLTMTTLSISA. Topologically, residues 301–311 are extracellular; the sequence is RNSLPKVAYAT. A helical transmembrane segment spans residues 312 to 332; it reads AMDWFIAVCYAFVFSALIEFA. Residues 333–420 lie on the Cytoplasmic side of the membrane; it reads TVNYFTKRGW…FNSVSKIDRM (88 aa). A helical transmembrane segment spans residues 421–441; the sequence is SRIVFPVLFGTFNLVYWATYL. Topologically, residues 442–451 are extracellular; sequence NREPVLGVSP.

Belongs to the ligand-gated ion channel (TC 1.A.9) family. Gamma-aminobutyric acid receptor (TC 1.A.9.5) subfamily. GABRA2 sub-subfamily. In terms of assembly, heteropentamer, formed by a combination of alpha (GABRA1-6), beta (GABRB1-3), gamma (GABRG1-3), delta (GABRD), epsilon (GABRE), rho (GABRR1-3), pi (GABRP) and theta (GABRQ) subunits, each subunit exhibiting distinct physiological and pharmacological properties. Interacts with UBQLN1. Interacts with KIF21B. Interacts with LHFPL4. Interacts with SHISA7; interaction leads to the regulation of GABA(A) receptor trafficking, channel deactivation kinetics and pharmacology. Post-translationally, glycosylated.

Its subcellular location is the postsynaptic cell membrane. The protein resides in the cell membrane. It is found in the cytoplasmic vesicle membrane. It localises to the cell projection. The protein localises to the dendrite. The enzyme catalyses chloride(in) = chloride(out). Its activity is regulated as follows. Activated by pentobarbital. Inhibited by the antagonist bicuculline. In terms of biological role, alpha subunit of the heteropentameric ligand-gated chloride channel gated by gamma-aminobutyric acid (GABA), a major inhibitory neurotransmitter in the brain. GABA-gated chloride channels, also named GABA(A) receptors (GABAAR), consist of five subunits arranged around a central pore and contain GABA active binding site(s) located at the alpha and beta subunit interfaces. When activated by GABA, GABAARs selectively allow the flow of chloride anions across the cell membrane down their electrochemical gradient. Chloride influx into the postsynaptic neuron following GABAAR opening decreases the neuron ability to generate a new action potential, thereby reducing nerve transmission. The alpha-2 subunit exhibits synaptogenic activity together with beta-2 and very little to no activity together with beta-3, the gamma-2 subunit being necessary but not sufficient to induce rapid synaptic contacts formation. This is Gamma-aminobutyric acid receptor subunit alpha-2 from Homo sapiens (Human).